The chain runs to 93 residues: Acylphosphatase (93 aa).

An Acylphosphatase-like domain is found at 5–93; it reads TAILRVTGFV…EERKTFDIVY (89 aa). Active-site residues include arginine 20 and asparagine 38.

This sequence belongs to the acylphosphatase family.

The catalysed reaction is an acyl phosphate + H2O = a carboxylate + phosphate + H(+). This Listeria monocytogenes serotype 4b (strain F2365) protein is Acylphosphatase (acyP).